Here is a 335-residue protein sequence, read N- to C-terminus: 3-hydroxy-3-methylglutaryl-CoA lyase, cytoplasmic (335 aa).

Residue Gly2 is the site of N-myristoyl glycine attachment. A Pyruvate carboxyltransferase domain is found at 43–310 (VKIVEVGPRD…ETGVDLLKVM (268 aa)). Residue Arg51 participates in substrate binding. Asp52 is a binding site for a divalent metal cation. An N6-acetyllysine modification is found at Lys58. Positions 243 and 245 each coordinate a divalent metal cation. Residue Cys276 is part of the active site. An a divalent metal cation-binding site is contributed by Asn285.

The protein belongs to the HMG-CoA lyase family. Requires a divalent metal cation as cofactor.

The protein resides in the cytoplasm. The protein localises to the cytosol. It is found in the endoplasmic reticulum membrane. It catalyses the reaction (3S)-3-hydroxy-3-methylglutaryl-CoA = acetoacetate + acetyl-CoA. It functions in the pathway metabolic intermediate metabolism; (S)-3-hydroxy-3-methylglutaryl-CoA degradation; acetoacetate from (S)-3-hydroxy-3-methylglutaryl-CoA: step 1/1. In terms of biological role, non-mitochondrial 3-hydroxy-3-methylglutaryl-CoA lyase that catalyzes a cation-dependent cleavage of (S)-3-hydroxy-3-methylglutaryl-CoA into acetyl-CoA and acetoacetate, a key step in ketogenesis, the products of which support energy production in nonhepatic animal tissues. The polypeptide is 3-hydroxy-3-methylglutaryl-CoA lyase, cytoplasmic (hmgcll1) (Danio rerio (Zebrafish)).